We begin with the raw amino-acid sequence, 192 residues long: Phosphoheptose isomerase (192 aa).

The region spanning 37 to 192 (LADSFKAGGK…IQLIEKEMVK (156 aa)) is the SIS domain. 52–54 (NGG) is a binding site for substrate. Zn(2+)-binding residues include His61 and Glu65. Residues Glu65, 93-94 (ND), 119-121 (STS), Ser124, and Gln172 contribute to the substrate site. Zn(2+) is bound by residues Gln172 and His180.

Belongs to the SIS family. GmhA subfamily. As to quaternary structure, homotetramer. Requires Zn(2+) as cofactor.

It localises to the cytoplasm. It carries out the reaction 2 D-sedoheptulose 7-phosphate = D-glycero-alpha-D-manno-heptose 7-phosphate + D-glycero-beta-D-manno-heptose 7-phosphate. The protein operates within carbohydrate biosynthesis; D-glycero-D-manno-heptose 7-phosphate biosynthesis; D-glycero-alpha-D-manno-heptose 7-phosphate and D-glycero-beta-D-manno-heptose 7-phosphate from sedoheptulose 7-phosphate: step 1/1. Catalyzes the isomerization of sedoheptulose 7-phosphate in D-glycero-D-manno-heptose 7-phosphate. The chain is Phosphoheptose isomerase from Shigella dysenteriae serotype 1 (strain Sd197).